The chain runs to 489 residues: Rhamnulokinase (489 aa).

Residue 13–17 coordinates ATP; sequence ASSGR. Cys-68 and Cys-222 form a disulfide bridge. Substrate-binding positions include Gly-83 and 236–238; that span reads HDT. Residue Asp-237 is the Proton acceptor of the active site. Thr-259 is a binding site for ATP. Residue Asn-296 participates in substrate binding. Gln-304 is an ATP binding site. Cysteines 353 and 370 form a disulfide. Position 402 (Gly-402) interacts with ATP. Cys-413 and Cys-417 are joined by a disulfide.

It belongs to the rhamnulokinase family. Mg(2+) is required as a cofactor.

The enzyme catalyses L-rhamnulose + ATP = L-rhamnulose 1-phosphate + ADP + H(+). It participates in carbohydrate degradation; L-rhamnose degradation; glycerone phosphate from L-rhamnose: step 2/3. In terms of biological role, involved in the catabolism of L-rhamnose (6-deoxy-L-mannose). Catalyzes the transfer of the gamma-phosphate group from ATP to the 1-hydroxyl group of L-rhamnulose to yield L-rhamnulose 1-phosphate. The polypeptide is Rhamnulokinase (Salmonella schwarzengrund (strain CVM19633)).